The chain runs to 518 residues: Metal transporter Nramp1 (518 aa).

Helical transmembrane passes span Phe35–Met55, Glu68–Ala88, Pro107–Ile127, Ile131–Ile151, Val172–Val192, Ile218–Leu238, Phe255–Ile275, Ser315–Ala337, Leu357–Ser377, Leu382–Leu402, Ile418–Phe438, and Val458–Leu478.

It belongs to the NRAMP (TC 2.A.55) family.

The protein resides in the membrane. In terms of biological role, probable metal transporter that may participate in the control of iron homeostasis. This is Metal transporter Nramp1 (NRAMP1) from Oryza sativa subsp. japonica (Rice).